The sequence spans 404 residues: Probable eukaryotic initiation factor 4A (404 aa).

Positions Met-1 to Phe-28 are disordered. Positions Pro-26–Gln-54 match the Q motif motif. A Helicase ATP-binding domain is found at Ile-57–Ile-231. Ala-70 to Thr-77 contributes to the ATP binding site. Residues Asp-179–Asp-182 carry the DEAD box motif. The 161-residue stretch at Gly-242 to Leu-402 folds into the Helicase C-terminal domain.

It belongs to the DEAD box helicase family. eIF4A subfamily. As to quaternary structure, eIF4F is a multi-subunit complex, the composition of which varies with external and internal environmental conditions. It is composed of at least EIF4A, EIF4E and EIF4G.

The catalysed reaction is ATP + H2O = ADP + phosphate + H(+). In terms of biological role, ATP-dependent RNA helicase which is a subunit of the eIF4F complex involved in cap recognition and is required for mRNA binding to ribosome. In the current model of translation initiation, eIF4A unwinds RNA secondary structures in the 5'-UTR of mRNAs which is necessary to allow efficient binding of the small ribosomal subunit, and subsequent scanning for the initiator codon. The polypeptide is Probable eukaryotic initiation factor 4A (Trypanosoma brucei brucei (strain 927/4 GUTat10.1)).